The following is a 382-amino-acid chain: Putative glutamate--cysteine ligase 2-1 (382 aa).

The protein belongs to the glutamate--cysteine ligase type 2 family. YbdK subfamily.

It catalyses the reaction L-cysteine + L-glutamate + ATP = gamma-L-glutamyl-L-cysteine + ADP + phosphate + H(+). In terms of biological role, ATP-dependent carboxylate-amine ligase which exhibits weak glutamate--cysteine ligase activity. This is Putative glutamate--cysteine ligase 2-1 from Nocardioides sp. (strain ATCC BAA-499 / JS614).